Here is a 386-residue protein sequence, read N- to C-terminus: Innexin unc-9 (386 aa).

A run of 4 helical transmembrane segments spans residues 33 to 53 (TAII…GFPI), 103 to 123 (QWVP…TIVW), 197 to 217 (FLYI…IFLL), and 282 to 302 (IFLF…CSLF).

The protein belongs to the pannexin family. In terms of assembly, heterooligomer of unc-7 and unc-9. Interacts with F-actin. Expressed in PLM neurons (at protein level). Expressed in the nerve ring.

It is found in the cell membrane. It localises to the cell junction. Its subcellular location is the gap junction. Structural component of gap junctions. Plays a role in maintaining gap junction activity to promote locomotion. In Caenorhabditis elegans, this protein is Innexin unc-9.